The primary structure comprises 411 residues: Protein-lysine 6-oxidase (411 aa).

Positions 1–21 are cleaved as a signal peptide; the sequence is MRFAWTVLFLGQLQFCPLLRC. Positions 22–162 are cleaved as a propeptide — removed by BMP1; that stretch reads APQAPREPPA…PPSHVDRMVG (141 aa). The segment at 60-168 is disordered; that stretch reads PQRRRDSSAT…RMVGDDPYNP (109 aa). 2 N-linked (GlcNAc...) asparagine glycosylation sites follow: N91 and N138. Y181 carries the post-translational modification Sulfotyrosine. Residues 207–411 are lysyl-oxidase like; sequence PDLVPDPYYI…YASGCTISPY (205 aa). 5 cysteine pairs are disulfide-bonded: C232-C238, C285-C334, C318-C324, C345-C355, and C392-C406. Residues H286, H288, and H290 each coordinate Cu cation. The lysine tyrosylquinone (Lys-Tyr) cross-link spans 314–349; it reads KASFCLEDTSCDYGYHRRFACTAHTQGLSPGCYDTY. Residue Y349 is modified to 2',4',5'-topaquinone.

The protein belongs to the lysyl oxidase family. In terms of assembly, interacts with MFAP4. Interacts (via propeptide) with EFEMP2; this interaction is strong and facilitates formation of ternary complexes with ELN during elastic fiber assembly; this interaction limits interaction of EFEMP2 with FBLN5. Requires Cu cation as cofactor. It depends on lysine tyrosylquinone residue as a cofactor. In terms of processing, the lysine tyrosylquinone cross-link (LTQ) is generated by condensation of the epsilon-amino group of a lysine with a topaquinone produced by oxidation of tyrosine. Post-translationally, proteolytically cleaved by BMP1 which removes the propeptide. Also proteolytically cleaved by ADAMTS2 and ADAMTS14, but not by ADAMTS3, at an additional cleavage site downstream of the BMP1 cleavage site. The propeptide plays a role in directing the deposition of this enzyme to elastic fibers, via interaction with tropoelastin. Cleavage by BMP1 to remove the propeptide does not increase enzymatic activity but increases binding to collagen. Cleavage by ADAMTS2 produces a form with reduced collagen-binding activity. Sulfated at Tyr-181 and also at either Tyr-177 or Tyr-178 which enhances binding to collagen. In terms of tissue distribution, aorta and lung.

The protein resides in the secreted. Its subcellular location is the extracellular space. It carries out the reaction L-lysyl-[protein] + O2 + H2O = (S)-2-amino-6-oxohexanoyl-[protein] + H2O2 + NH4(+). In terms of biological role, responsible for the post-translational oxidative deamination of peptidyl lysine residues in precursors to fibrous collagen and elastin. Regulator of Ras expression. May play a role in tumor suppression. Plays a role in the aortic wall architecture. The protein is Protein-lysine 6-oxidase of Rattus norvegicus (Rat).